A 60-amino-acid chain; its full sequence is Large ribosomal subunit protein uL30 (60 aa).

This sequence belongs to the universal ribosomal protein uL30 family. As to quaternary structure, part of the 50S ribosomal subunit.

This is Large ribosomal subunit protein uL30 from Shewanella sp. (strain MR-7).